A 194-amino-acid chain; its full sequence is dTTP/UTP pyrophosphatase (194 aa).

D76 (proton acceptor) is an active-site residue.

Belongs to the Maf family. YhdE subfamily. The cofactor is a divalent metal cation.

The protein resides in the cytoplasm. It catalyses the reaction dTTP + H2O = dTMP + diphosphate + H(+). The catalysed reaction is UTP + H2O = UMP + diphosphate + H(+). In terms of biological role, nucleoside triphosphate pyrophosphatase that hydrolyzes dTTP and UTP. May have a dual role in cell division arrest and in preventing the incorporation of modified nucleotides into cellular nucleic acids. The chain is dTTP/UTP pyrophosphatase from Shewanella oneidensis (strain ATCC 700550 / JCM 31522 / CIP 106686 / LMG 19005 / NCIMB 14063 / MR-1).